The chain runs to 452 residues: Lipase member H (452 aa).

An N-terminal signal peptide occupies residues 1–16 (MLRFYLFISLLCLVRS). N-linked (GlcNAc...) asparagine glycans are attached at residues Asn50, Asn66, and Asn122. The active-site Nucleophile is the Ser154. The Charge relay system role is filled by Asp178. A disulfide bond links Cys233 and Cys247. The active-site Charge relay system is His249. Residue Asn263 is glycosylated (N-linked (GlcNAc...) asparagine). Cystine bridges form between Cys271-Cys282, Cys285-Cys293, and Cys428-Cys447.

Belongs to the AB hydrolase superfamily. Lipase family. In terms of assembly, interacts with TTMP/C3orf52. Expressed in liver and lacrimal gland.

It is found in the secreted. Its subcellular location is the cell membrane. It catalyses the reaction 1-hexadecanoyl-2-(9Z-octadecenoyl)-sn-glycero-3-phosphate + H2O = 2-(9Z-octadecenoyl)-sn-glycero-3-phosphate + hexadecanoate + H(+). In terms of biological role, hydrolyzes specifically phosphatidic acid (PA) to produce 2-acyl lysophosphatidic acid (LPA; a potent bioactive lipid mediator) and fatty acid. Does not hydrolyze other phospholipids, like phosphatidylserine (PS), phosphatidylcholine (PC) and phosphatidylethanolamine (PE) or triacylglycerol (TG). This Oryctolagus cuniculus (Rabbit) protein is Lipase member H (LIPH).